The following is a 288-amino-acid chain: Pantothenate synthetase (288 aa).

Met-30–His-37 contributes to the ATP binding site. Residue His-37 is the Proton donor of the active site. Gln-61 provides a ligand contact to (R)-pantoate. Beta-alanine is bound at residue Gln-61. Gly-147–Asp-150 provides a ligand contact to ATP. Gln-153 lines the (R)-pantoate pocket. ATP contacts are provided by residues Val-176 and Ile-184 to Arg-187.

It belongs to the pantothenate synthetase family. As to quaternary structure, homodimer.

Its subcellular location is the cytoplasm. The enzyme catalyses (R)-pantoate + beta-alanine + ATP = (R)-pantothenate + AMP + diphosphate + H(+). Its pathway is cofactor biosynthesis; (R)-pantothenate biosynthesis; (R)-pantothenate from (R)-pantoate and beta-alanine: step 1/1. Functionally, catalyzes the condensation of pantoate with beta-alanine in an ATP-dependent reaction via a pantoyl-adenylate intermediate. This chain is Pantothenate synthetase, found in Chlorobium phaeobacteroides (strain BS1).